Here is a 210-residue protein sequence, read N- to C-terminus: Small ribosomal subunit protein uS4 (210 aa).

Residues 99-170 enclose the S4 RNA-binding domain; sequence RRLDNAVFRA…NLEAVVRRGV (72 aa).

It belongs to the universal ribosomal protein uS4 family. As to quaternary structure, part of the 30S ribosomal subunit. Contacts protein S5. The interaction surface between S4 and S5 is involved in control of translational fidelity.

In terms of biological role, one of the primary rRNA binding proteins, it binds directly to 16S rRNA where it nucleates assembly of the body of the 30S subunit. With S5 and S12 plays an important role in translational accuracy. The chain is Small ribosomal subunit protein uS4 from Desulfotalea psychrophila (strain LSv54 / DSM 12343).